Here is a 591-residue protein sequence, read N- to C-terminus: L-fucose isomerase (591 aa).

Catalysis depends on proton acceptor residues Glu-337 and Asp-361. Mn(2+) contacts are provided by Glu-337, Asp-361, and His-528.

Belongs to the L-fucose isomerase family. As to quaternary structure, homohexamer. It depends on Mn(2+) as a cofactor.

It localises to the cytoplasm. The enzyme catalyses L-fucose = L-fuculose. It functions in the pathway carbohydrate degradation; L-fucose degradation; L-lactaldehyde and glycerone phosphate from L-fucose: step 1/3. Functionally, converts the aldose L-fucose into the corresponding ketose L-fuculose. The chain is L-fucose isomerase from Salmonella arizonae (strain ATCC BAA-731 / CDC346-86 / RSK2980).